A 324-amino-acid chain; its full sequence is PDZ domain-containing protein MAGIX (324 aa).

Residues 1 to 26 (MDSRAGNTADPRGGRRGGGLQGSRSP) form a disordered region. A PDZ domain is found at 128–212 (SVELTRGPAG…HLCLVLQRPQ (85 aa)). Over residues 216–241 (GSRIKEVGGHRKTDRSLDPRGSRVES) the composition is skewed to basic and acidic residues. The disordered stretch occupies residues 216 to 263 (GSRIKEVGGHRKTDRSLDPRGSRVESRSTISPVHHRPKTRTSPRPSPE). Ser-261 is subject to Phosphoserine.

The protein is PDZ domain-containing protein MAGIX (Magix) of Mus musculus (Mouse).